The following is a 510-amino-acid chain: Histidine ammonia-lyase (510 aa).

The segment at residues 144–146 (ASG) is a cross-link (5-imidazolinone (Ala-Gly)). Ser145 carries the post-translational modification 2,3-didehydroalanine (Ser).

This sequence belongs to the PAL/histidase family. Post-translationally, contains an active site 4-methylidene-imidazol-5-one (MIO), which is formed autocatalytically by cyclization and dehydration of residues Ala-Ser-Gly.

The protein localises to the cytoplasm. It carries out the reaction L-histidine = trans-urocanate + NH4(+). The protein operates within amino-acid degradation; L-histidine degradation into L-glutamate; N-formimidoyl-L-glutamate from L-histidine: step 1/3. The polypeptide is Histidine ammonia-lyase (Chromobacterium violaceum (strain ATCC 12472 / DSM 30191 / JCM 1249 / CCUG 213 / NBRC 12614 / NCIMB 9131 / NCTC 9757 / MK)).